The sequence spans 276 residues: 4-deoxy-L-threo-5-hexosulose-uronate ketol-isomerase (276 aa).

4 residues coordinate Zn(2+): His194, His196, Glu201, and His243.

It belongs to the KduI family. Zn(2+) serves as cofactor.

It catalyses the reaction 5-dehydro-4-deoxy-D-glucuronate = 3-deoxy-D-glycero-2,5-hexodiulosonate. Its pathway is glycan metabolism; pectin degradation; 2-dehydro-3-deoxy-D-gluconate from pectin: step 4/5. In terms of biological role, catalyzes the isomerization of 5-dehydro-4-deoxy-D-glucuronate to 3-deoxy-D-glycero-2,5-hexodiulosonate. This Halalkalibacterium halodurans (strain ATCC BAA-125 / DSM 18197 / FERM 7344 / JCM 9153 / C-125) (Bacillus halodurans) protein is 4-deoxy-L-threo-5-hexosulose-uronate ketol-isomerase.